The following is a 608-amino-acid chain: Serine/threonine-protein kinase ROP17 (608 aa).

The first 21 residues, 1 to 21 (MELVLCFVIITISGVIRESSA), serve as a signal peptide directing secretion. N-linked (GlcNAc...) asparagine glycosylation occurs at Asn76. Positions 283–579 (LKKRGFLGGG…QQALEQFSLL (297 aa)) constitute a Protein kinase domain. ATP-binding positions include 289-297 (LGGGGFGLV) and Lys312. Asp436 acts as the Proton acceptor in catalysis.

The protein belongs to the protein kinase superfamily. Ser/Thr protein kinase family. As to quaternary structure, interacts with ROP5; interaction with ROP5 does not affect kinase activity. Interacts with human BCL2; the interaction probably promotes BCL2 phosphorylation and degradation.

The protein localises to the secreted. The protein resides in the cytoplasmic vesicle. Its subcellular location is the secretory vesicle. It localises to the rhoptry. It is found in the parasitophorous vacuole membrane. It carries out the reaction L-threonyl-[protein] + ATP = O-phospho-L-threonyl-[protein] + ADP + H(+). The catalysed reaction is L-seryl-[protein] + ATP = O-phospho-L-seryl-[protein] + ADP + H(+). In terms of biological role, protein kinase. Virulence factor. Promotes migration of Toxoplasma-infected macrophages through collagen matrix, facilitating parasite transport through tissues and systemic dissemination. Plays a role in the translocation of dense granule effectors, such as GRA16 and GRA24, across the parasitophorous vacuole membrane in Toxoplasma-infected host cells. Phosphorylates mouse IRGB6 (TGTP1/TGTP2), an immunity-related GTPase (IRG) that protects mice from infection by certain intracellular pathogens; the phosphorylation leads to the disassembly of IRGB6 polymers into monomers and dimers. May modulate gene expression in human cells. Promotes autophagy in human cells via modulation of the BCL2-BECN1 pathway. This is Serine/threonine-protein kinase ROP17 from Toxoplasma gondii.